The sequence spans 611 residues: Dihydroxy-acid dehydratase (611 aa).

Asp81 is a binding site for Mg(2+). Residue Cys122 coordinates [2Fe-2S] cluster. Positions 123 and 124 each coordinate Mg(2+). Residue Lys124 is modified to N6-carboxylysine. Cys195 is a [2Fe-2S] cluster binding site. Glu491 contacts Mg(2+). Ser517 acts as the Proton acceptor in catalysis.

Belongs to the IlvD/Edd family. In terms of assembly, homodimer. The cofactor is [2Fe-2S] cluster. It depends on Mg(2+) as a cofactor.

It carries out the reaction (2R)-2,3-dihydroxy-3-methylbutanoate = 3-methyl-2-oxobutanoate + H2O. The catalysed reaction is (2R,3R)-2,3-dihydroxy-3-methylpentanoate = (S)-3-methyl-2-oxopentanoate + H2O. The protein operates within amino-acid biosynthesis; L-isoleucine biosynthesis; L-isoleucine from 2-oxobutanoate: step 3/4. Its pathway is amino-acid biosynthesis; L-valine biosynthesis; L-valine from pyruvate: step 3/4. Functionally, functions in the biosynthesis of branched-chain amino acids. Catalyzes the dehydration of (2R,3R)-2,3-dihydroxy-3-methylpentanoate (2,3-dihydroxy-3-methylvalerate) into 2-oxo-3-methylpentanoate (2-oxo-3-methylvalerate) and of (2R)-2,3-dihydroxy-3-methylbutanoate (2,3-dihydroxyisovalerate) into 2-oxo-3-methylbutanoate (2-oxoisovalerate), the penultimate precursor to L-isoleucine and L-valine, respectively. The protein is Dihydroxy-acid dehydratase of Histophilus somni (strain 129Pt) (Haemophilus somnus).